Here is a 399-residue protein sequence, read N- to C-terminus: Elongation factor Tu (399 aa).

The region spanning 10-209 is the tr-type G domain; it reads KPHVNIGTIG…AVDEYIPTPE (200 aa). The interval 19-26 is G1; it reads GHVDHGKT. 19–26 serves as a coordination point for GTP; that stretch reads GHVDHGKT. Thr26 contributes to the Mg(2+) binding site. The interval 60 to 64 is G2; that stretch reads GITIA. Positions 81-84 are G3; it reads DCPG. Residues 81–85 and 136–139 contribute to the GTP site; these read DCPGH and NKED. The G4 stretch occupies residues 136–139; that stretch reads NKED. The tract at residues 174–176 is G5; that stretch reads SAL.

It belongs to the TRAFAC class translation factor GTPase superfamily. Classic translation factor GTPase family. EF-Tu/EF-1A subfamily. In terms of assembly, monomer.

It is found in the cytoplasm. It catalyses the reaction GTP + H2O = GDP + phosphate + H(+). Its function is as follows. GTP hydrolase that promotes the GTP-dependent binding of aminoacyl-tRNA to the A-site of ribosomes during protein biosynthesis. The sequence is that of Elongation factor Tu from Nitratiruptor sp. (strain SB155-2).